The chain runs to 128 residues: MKKLTKTNSHRQQKLASIINEVLIEILKRGKMLDKRLFDCPLTITKIIVTADLKIANCYFFPFNTKLTFDEIMDALNNSKHAIRNFITNRINMKFSPEIRFYYDYGFDNAIKIEELLKNSSFKDKTSE.

Belongs to the RbfA family. In terms of assembly, monomer. Binds 30S ribosomal subunits, but not 50S ribosomal subunits or 70S ribosomes.

It is found in the cytoplasm. One of several proteins that assist in the late maturation steps of the functional core of the 30S ribosomal subunit. Associates with free 30S ribosomal subunits (but not with 30S subunits that are part of 70S ribosomes or polysomes). Required for efficient processing of 16S rRNA. May interact with the 5'-terminal helix region of 16S rRNA. The protein is Ribosome-binding factor A of Rickettsia prowazekii (strain Madrid E).